Reading from the N-terminus, the 205-residue chain is High frequency lysogenization protein HflD homolog (205 aa).

It belongs to the HflD family.

The protein resides in the cytoplasm. The protein localises to the cell inner membrane. This is High frequency lysogenization protein HflD homolog from Shewanella sp. (strain MR-7).